The primary structure comprises 507 residues: Iroquois-class homeodomain protein IRX-3 (507 aa).

The disordered stretch occupies residues 19–39; sequence RPGAAGGGGGGSSAGGRSGPG. Residues 22-39 show a composition bias toward gly residues; sequence AAGGGGGGSSAGGRSGPG. A DNA-binding region (homeobox; TALE-type) is located at residues 130-192; the sequence is DPSRPKNATR…NARRRLKKEN (63 aa). Disordered regions lie at residues 193–398 and 416–468; these read KMTW…AAAA and RPFP…SGTD. Composition is skewed to acidic residues over residues 213 to 223 and 230 to 261; these read REEEDEEEDEE and EMEEEELAGEEEDTGGEGLADDDEDEEIDLEN. Pro residues-rich tracts occupy residues 314–342 and 418–428; these read APPPPPVARAPASPPSPPSSLDPCAPAPA and FPGPPAGPRPH. Phosphoserine is present on residues Ser-326 and Ser-329. The span at 436–460 shows a compositional bias: low complexity; the sequence is APQHLLGLPGAAGHPAAAAAAYARP.

This sequence belongs to the TALE/IRO homeobox family. As to expression, expressed by neural progenitor cells in discrete domains of the ventral neural tube. Also expressed in specific and overlapping patterns with Irx1 and Irx2 in the developing and adult metanephric kidney. In the adult metanephros, renal expression is confined to the S3 segment of the proximal tubule, in the loop of Henle.

The protein localises to the nucleus. In terms of biological role, transcription factor involved in SHH-dependent neural patterning. Together with NKX2-2 and NKX6-1 acts to restrict the generation of motor neurons to the appropriate region of the neural tube. Belongs to the class I proteins of neuronal progenitor factors, which are repressed by SHH signals. Involved in the transcriptional repression of MNX1 in non-motor neuron cells. Acts as a regulator of energy metabolism. The protein is Iroquois-class homeodomain protein IRX-3 (Irx3) of Mus musculus (Mouse).